The chain runs to 628 residues: Putative ankyrin repeat protein L769 (628 aa).

ANK repeat units follow at residues 217 to 246 (NYMD…EYDF), 333 to 362 (DLDE…DINR), 421 to 451 (TAEN…NHDL), and 512 to 542 (NNLK…DQDY).

The polypeptide is Putative ankyrin repeat protein L769 (Acanthamoeba polyphaga mimivirus (APMV)).